An 820-amino-acid polypeptide reads, in one-letter code: Leucine--tRNA ligase (820 aa).

Positions 42–52 (PYPSGDLHMGH) match the 'HIGH' region motif. The 'KMSKS' region motif lies at 576–580 (KMSKS). Lysine 579 contacts ATP.

It belongs to the class-I aminoacyl-tRNA synthetase family.

It is found in the cytoplasm. The catalysed reaction is tRNA(Leu) + L-leucine + ATP = L-leucyl-tRNA(Leu) + AMP + diphosphate. This chain is Leucine--tRNA ligase, found in Coxiella burnetii (strain RSA 493 / Nine Mile phase I).